Consider the following 122-residue polypeptide: Phospholipase A2 homolog ECS_00014 (122 aa).

7 cysteine pairs are disulfide-bonded: Cys-26/Cys-115, Cys-28/Cys-44, Cys-43/Cys-95, Cys-49/Cys-122, Cys-50/Cys-88, Cys-57/Cys-81, and Cys-75/Cys-86. The segment at 105–117 is important for membrane-damaging activities in eukaryotes and bacteria; heparin-binding; the sequence is KKYTYYPNFWCKG.

It belongs to the phospholipase A2 family. Group II subfamily. S49 sub-subfamily. Monomer. As to expression, expressed by the venom gland.

The protein resides in the secreted. Its function is as follows. Snake venom phospholipase A2 homolog that lacks enzymatic activity. Shows high myotoxin activities and displays edema-inducing activities. Has cytotoxic activities against HUVEC cells (LC(50)=12.2 uL) and human lung adenocarcinoma A549 cells (LC(50)=8.5 uL). The chain is Phospholipase A2 homolog ECS_00014 from Echis carinatus sochureki (Saw-scaled viper).